A 158-amino-acid polypeptide reads, in one-letter code: Eukaryotic translation initiation factor 5A (158 aa).

Lysine 51 is subject to Hypusine.

Belongs to the eIF-5A family. In terms of processing, lys-51 undergoes hypusination, a unique post-translational modification that consists in the addition of a butylamino group from spermidine to lysine side chain, leading to the formation of the unusual amino acid hypusine. eIF-5As are the only known proteins to undergo this modification, which is essential for their function.

It localises to the cytoplasm. Functionally, translation factor that promotes translation elongation and termination, particularly upon ribosome stalling at specific amino acid sequence contexts. Binds between the exit (E) and peptidyl (P) site of the ribosome and promotes rescue of stalled ribosome: specifically required for efficient translation of polyproline-containing peptides as well as other motifs that stall the ribosome. Acts as a ribosome quality control (RQC) cofactor by joining the RQC complex to facilitate peptidyl transfer during CAT tailing step. The polypeptide is Eukaryotic translation initiation factor 5A (ANB1) (Candida albicans (strain SC5314 / ATCC MYA-2876) (Yeast)).